The sequence spans 393 residues: N-lysine methyltransferase KMT5A (393 aa).

Residues 68–88 (PGPEMVERRGPGRPRTDGENV) form a disordered region. Residues 72–85 (MVERRGPGRPRTDG) are compositionally biased toward basic and acidic residues. The residue at position 100 (serine 100) is a Phosphoserine. Residues 134-163 (RKREEKRNAGNAVRSAMKSEEQKIKDARKG) adopt a coiled-coil conformation. A disordered region spans residues 135–241 (KREEKRNAGN…SRKSKAELQS (107 aa)). The span at 150–162 (MKSEEQKIKDARK) shows a compositional bias: basic and acidic residues. Lysine 162 carries the N6-acetyllysine modification. At threonine 181 the chain carries Phosphothreonine. Over residues 197–213 (ALKKPIKGKQAPRKKAQ) the composition is skewed to basic residues. The 122-residue stretch at 257-378 (EGMKIDLIDG…AGEELLYDYG (122 aa)) folds into the SET domain. S-adenosyl-L-methionine contacts are provided by residues 267 to 269 (KGR), tyrosine 312, and 339 to 340 (NH).

It belongs to the class V-like SAM-binding methyltransferase superfamily. Histone-lysine methyltransferase family. PR/SET subfamily. Interacts with L3MBTL1. In terms of assembly, interacts with SIRT2 (phosphorylated form); the interaction is direct, stimulates KMT5A-mediated methyltransferase activity at histone H4 'Lys-20' (H4K20me1) and is increased in a H(2)O(2)-induced oxidative stress-dependent manner. Acetylated at Lys-162; does not affect methyltransferase activity. Deacetylated at Lys-162 possibly by SIRT2; does not change methyltransferase activity. Post-translationally, ubiquitinated and degraded by the DCX(DTL) complex.

The protein resides in the nucleus. It is found in the chromosome. It catalyses the reaction L-lysyl(20)-[histone H4] + S-adenosyl-L-methionine = N(6)-methyl-L-lysyl(20)-[histone H4] + S-adenosyl-L-homocysteine + H(+). The catalysed reaction is L-lysyl-[protein] + S-adenosyl-L-methionine = N(6)-methyl-L-lysyl-[protein] + S-adenosyl-L-homocysteine + H(+). In terms of biological role, protein-lysine N-methyltransferase that monomethylates both histones and non-histone proteins. Specifically monomethylates 'Lys-20' of histone H4 (H4K20me1). H4K20me1 is enriched during mitosis and represents a specific tag for epigenetic transcriptional repression. Mainly functions in euchromatin regions, thereby playing a central role in the silencing of euchromatic genes. Required for cell proliferation, probably by contributing to the maintenance of proper higher-order structure of DNA during mitosis. Involved in chromosome condensation and proper cytokinesis. Nucleosomes are preferred as substrate compared to free histones. Mediates monomethylation of p53/TP53 at 'Lys-382', leading to repress p53/TP53-target genes. Plays a negative role in TGF-beta response regulation and a positive role in cell migration. The sequence is that of N-lysine methyltransferase KMT5A from Homo sapiens (Human).